Here is a 436-residue protein sequence, read N- to C-terminus: 3-ketoacyl-CoA thiolase (436 aa).

The active-site Acyl-thioester intermediate is Cys99. Active-site proton acceptor residues include His392 and Cys422.

The protein belongs to the thiolase-like superfamily. Thiolase family. As to quaternary structure, heterotetramer of two alpha chains (FadJ) and two beta chains (FadI).

Its subcellular location is the cytoplasm. The catalysed reaction is an acyl-CoA + acetyl-CoA = a 3-oxoacyl-CoA + CoA. Its pathway is lipid metabolism; fatty acid beta-oxidation. In terms of biological role, catalyzes the final step of fatty acid oxidation in which acetyl-CoA is released and the CoA ester of a fatty acid two carbons shorter is formed. This chain is 3-ketoacyl-CoA thiolase, found in Escherichia coli (strain 55989 / EAEC).